Consider the following 284-residue polypeptide: Bifunctional protein FolD (284 aa).

NADP(+) is bound by residues 166–168 (GAS) and I232.

This sequence belongs to the tetrahydrofolate dehydrogenase/cyclohydrolase family. As to quaternary structure, homodimer.

It carries out the reaction (6R)-5,10-methylene-5,6,7,8-tetrahydrofolate + NADP(+) = (6R)-5,10-methenyltetrahydrofolate + NADPH. The enzyme catalyses (6R)-5,10-methenyltetrahydrofolate + H2O = (6R)-10-formyltetrahydrofolate + H(+). It functions in the pathway one-carbon metabolism; tetrahydrofolate interconversion. Its function is as follows. Catalyzes the oxidation of 5,10-methylenetetrahydrofolate to 5,10-methenyltetrahydrofolate and then the hydrolysis of 5,10-methenyltetrahydrofolate to 10-formyltetrahydrofolate. The protein is Bifunctional protein FolD of Glaesserella parasuis serovar 5 (strain SH0165) (Haemophilus parasuis).